The following is a 445-amino-acid chain: Xylose isomerase (445 aa).

Catalysis depends on residues His-99 and Asp-102. The Mg(2+) site is built by Glu-230, Glu-266, His-269, Asp-294, Asp-305, Asp-307, and Asp-337.

The protein belongs to the xylose isomerase family. In terms of assembly, homotetramer. The cofactor is Mg(2+).

It is found in the cytoplasm. The enzyme catalyses alpha-D-xylose = alpha-D-xylulofuranose. The sequence is that of Xylose isomerase from Geobacillus thermodenitrificans (strain NG80-2).